Consider the following 307-residue polypeptide: Ornithine carbamoyltransferase (307 aa).

Carbamoyl phosphate is bound by residues 54–57 (STRT), Gln-81, Arg-105, and 132–135 (HPCQ). Residues Asn-163, Asp-221, and 225–226 (SM) contribute to the L-ornithine site. Carbamoyl phosphate-binding positions include 261–262 (CL) and Arg-289.

This sequence belongs to the aspartate/ornithine carbamoyltransferase superfamily. OTCase family.

It is found in the cytoplasm. It carries out the reaction carbamoyl phosphate + L-ornithine = L-citrulline + phosphate + H(+). The protein operates within amino-acid biosynthesis; L-arginine biosynthesis; L-arginine from L-ornithine and carbamoyl phosphate: step 1/3. Its function is as follows. Reversibly catalyzes the transfer of the carbamoyl group from carbamoyl phosphate (CP) to the N(epsilon) atom of ornithine (ORN) to produce L-citrulline. The protein is Ornithine carbamoyltransferase of Chromobacterium violaceum (strain ATCC 12472 / DSM 30191 / JCM 1249 / CCUG 213 / NBRC 12614 / NCIMB 9131 / NCTC 9757 / MK).